Consider the following 360-residue polypeptide: DAZ-associated protein 1 (360 aa).

RRM domains lie at 10–97 (GKLF…RSRP) and 114–191 (NKIF…RAEP). Disordered regions lie at residues 73-116 (HTLD…SNKI) and 184-345 (VEVK…DFPF). Composition is skewed to basic and acidic residues over residues 91-112 (QPER…ENSR) and 184-195 (VEVKRAEPRDSK). A compositionally biased stretch (polar residues) spans 203 to 231 (GSNQWGSRAMQSTANGWTGQPPQTWQGYS). The span at 242 to 253 (TIGGYGQPAGRG) shows a compositional bias: gly residues. Residues 271-301 (GPFPPPQGFPPGYATPPPFGYGYGPPPPPPD) are compositionally biased toward pro residues. A compositionally biased stretch (polar residues) spans 328-345 (QSAQDLSKPPSGQQDFPF).

In terms of assembly, component of a mRNP complex, at least composed of DAZAP1, IGF2BP3-A, STAU and VgRBP60. Binds to the 3'-UTR of Vg1 mRNA. Interacts with profilin, a protein involved in actin assembly. Interacts with VgRBP71. Expressed in oocytes.

It localises to the cytoplasm. Functionally, RNA-binding protein, which is required during gametogenesis. May be involved in the actin-dependent anchoring of Vg1 mRNA in the vegetal cortex of the oocyte. The polypeptide is DAZ-associated protein 1 (dazap1) (Xenopus laevis (African clawed frog)).